A 212-amino-acid chain; its full sequence is NAD(P)H-quinone oxidoreductase subunit K, chloroplastic (212 aa).

Residues Cys-43, Cys-44, Cys-108, and Cys-139 each contribute to the [4Fe-4S] cluster site.

This sequence belongs to the complex I 20 kDa subunit family. NDH is composed of at least 16 different subunits, 5 of which are encoded in the nucleus. [4Fe-4S] cluster serves as cofactor.

The protein resides in the plastid. It is found in the chloroplast thylakoid membrane. The catalysed reaction is a plastoquinone + NADH + (n+1) H(+)(in) = a plastoquinol + NAD(+) + n H(+)(out). It carries out the reaction a plastoquinone + NADPH + (n+1) H(+)(in) = a plastoquinol + NADP(+) + n H(+)(out). Functionally, NDH shuttles electrons from NAD(P)H:plastoquinone, via FMN and iron-sulfur (Fe-S) centers, to quinones in the photosynthetic chain and possibly in a chloroplast respiratory chain. The immediate electron acceptor for the enzyme in this species is believed to be plastoquinone. Couples the redox reaction to proton translocation, and thus conserves the redox energy in a proton gradient. The sequence is that of NAD(P)H-quinone oxidoreductase subunit K, chloroplastic from Phaseolus vulgaris (Kidney bean).